Here is a 261-residue protein sequence, read N- to C-terminus: Glucosamine-6-phosphate deaminase (261 aa).

Asp67 serves as the catalytic Proton acceptor; for enolization step. Catalysis depends on Asp136, which acts as the For ring-opening step. His138 (proton acceptor; for ring-opening step) is an active-site residue. The active-site For ring-opening step is Glu143.

This sequence belongs to the glucosamine/galactosamine-6-phosphate isomerase family. NagB subfamily.

It carries out the reaction alpha-D-glucosamine 6-phosphate + H2O = beta-D-fructose 6-phosphate + NH4(+). The protein operates within amino-sugar metabolism; N-acetylneuraminate degradation; D-fructose 6-phosphate from N-acetylneuraminate: step 5/5. In terms of biological role, catalyzes the reversible isomerization-deamination of glucosamine 6-phosphate (GlcN6P) to form fructose 6-phosphate (Fru6P) and ammonium ion. This chain is Glucosamine-6-phosphate deaminase, found in Streptomyces avermitilis (strain ATCC 31267 / DSM 46492 / JCM 5070 / NBRC 14893 / NCIMB 12804 / NRRL 8165 / MA-4680).